The sequence spans 363 residues: UDP-N-acetylglucosamine--N-acetylmuramyl-(pentapeptide) pyrophosphoryl-undecaprenol N-acetylglucosamine transferase (363 aa).

UDP-N-acetyl-alpha-D-glucosamine-binding positions include 15–17 (TGG), asparagine 127, arginine 169, serine 197, isoleucine 251, 270–275 (ALTVSE), and glutamine 296.

This sequence belongs to the glycosyltransferase 28 family. MurG subfamily.

It is found in the cell inner membrane. It catalyses the reaction di-trans,octa-cis-undecaprenyl diphospho-N-acetyl-alpha-D-muramoyl-L-alanyl-D-glutamyl-meso-2,6-diaminopimeloyl-D-alanyl-D-alanine + UDP-N-acetyl-alpha-D-glucosamine = di-trans,octa-cis-undecaprenyl diphospho-[N-acetyl-alpha-D-glucosaminyl-(1-&gt;4)]-N-acetyl-alpha-D-muramoyl-L-alanyl-D-glutamyl-meso-2,6-diaminopimeloyl-D-alanyl-D-alanine + UDP + H(+). It participates in cell wall biogenesis; peptidoglycan biosynthesis. Functionally, cell wall formation. Catalyzes the transfer of a GlcNAc subunit on undecaprenyl-pyrophosphoryl-MurNAc-pentapeptide (lipid intermediate I) to form undecaprenyl-pyrophosphoryl-MurNAc-(pentapeptide)GlcNAc (lipid intermediate II). This is UDP-N-acetylglucosamine--N-acetylmuramyl-(pentapeptide) pyrophosphoryl-undecaprenol N-acetylglucosamine transferase from Dichelobacter nodosus (strain VCS1703A).